Consider the following 262-residue polypeptide: Phosphatidylglycerol--prolipoprotein diacylglyceryl transferase (262 aa).

The next 4 membrane-spanning stretches (helical) occupy residues 9–29, 41–61, 80–100, and 109–129; these read LGPL…ILAV, IIPD…ILGA, IFAI…GALV, and LINT…AQSL. R131 contacts a 1,2-diacyl-sn-glycero-3-phospho-(1'-sn-glycerol). The next 3 helical transmembrane spans lie at 167 to 187, 197 to 217, and 226 to 246; these read QPTF…ILIF, GHIT…IEGM, and GLRV…MIVI.

This sequence belongs to the Lgt family.

The protein resides in the cell membrane. It catalyses the reaction L-cysteinyl-[prolipoprotein] + a 1,2-diacyl-sn-glycero-3-phospho-(1'-sn-glycerol) = an S-1,2-diacyl-sn-glyceryl-L-cysteinyl-[prolipoprotein] + sn-glycerol 1-phosphate + H(+). Its pathway is protein modification; lipoprotein biosynthesis (diacylglyceryl transfer). Functionally, catalyzes the transfer of the diacylglyceryl group from phosphatidylglycerol to the sulfhydryl group of the N-terminal cysteine of a prolipoprotein, the first step in the formation of mature lipoproteins. The sequence is that of Phosphatidylglycerol--prolipoprotein diacylglyceryl transferase from Streptococcus pneumoniae (strain ATCC 700669 / Spain 23F-1).